Reading from the N-terminus, the 294-residue chain is MASLKDLRMKIVSVKSTRKITSAMKMVAASKLRRAQTAAEAARPFAERMERMLGTLAASLAGQSGAPRMISGTGFDKVHLLVAVTADRGLCGGFNSSIVRATKAMAADLLKQGKTIKIMPVGRKAREQLRRDYGQYMIEGFENLGRKGIVFAEADQVASQISAMFDAEEFDVCTVVYNKFKSAIAQEVTRQQVIPFPVPEQAAKSETGPKAIYEFEPSEEEILAEILPRNLATQMFRALLESQASEQGARMTAMDNATRNAGDMINALAIKYNRSRQAQITKELIEIISGAEAL.

It belongs to the ATPase gamma chain family. F-type ATPases have 2 components, CF(1) - the catalytic core - and CF(0) - the membrane proton channel. CF(1) has five subunits: alpha(3), beta(3), gamma(1), delta(1), epsilon(1). CF(0) has three main subunits: a, b and c.

The protein localises to the cell inner membrane. In terms of biological role, produces ATP from ADP in the presence of a proton gradient across the membrane. The gamma chain is believed to be important in regulating ATPase activity and the flow of protons through the CF(0) complex. This chain is ATP synthase gamma chain, found in Paramagnetospirillum magneticum (strain ATCC 700264 / AMB-1) (Magnetospirillum magneticum).